The chain runs to 430 residues: Adenylosuccinate synthetase (430 aa).

GTP-binding positions include 13 to 19 (GDEGKGK) and 41 to 43 (GHT). Asp14 acts as the Proton acceptor in catalysis. Mg(2+) is bound by residues Asp14 and Gly41. IMP-binding positions include 14–17 (DEGK), 39–42 (NAGH), Thr130, Arg144, Gln225, Thr240, and Arg304. Catalysis depends on His42, which acts as the Proton donor. 300–306 (STTGRKR) contacts substrate. GTP is bound by residues Arg306, 332-334 (KLD), and 414-416 (STG).

Belongs to the adenylosuccinate synthetase family. Homodimer. Mg(2+) serves as cofactor.

The protein localises to the cytoplasm. The enzyme catalyses IMP + L-aspartate + GTP = N(6)-(1,2-dicarboxyethyl)-AMP + GDP + phosphate + 2 H(+). Its pathway is purine metabolism; AMP biosynthesis via de novo pathway; AMP from IMP: step 1/2. Its function is as follows. Plays an important role in the de novo pathway of purine nucleotide biosynthesis. Catalyzes the first committed step in the biosynthesis of AMP from IMP. The sequence is that of Adenylosuccinate synthetase from Buchnera aphidicola subsp. Schizaphis graminum (strain Sg).